Here is a 302-residue protein sequence, read N- to C-terminus: Beta-casein (302 aa).

The signal sequence occupies residues 1 to 15 (MKLLILTCLVALGFA). S23 and S25 each carry phosphoserine. A run of 16 repeats spans residues 144–151 (KREMLPIY), 152–159 (ERERLPAH), 160–167 (KRESLLAH), 168–175 (ERESLLAH), 176–182 (ERDILVP), 183–190 (QREMSFVP), 191–198 (EREFLFAS), 199–204 (ERVVLP), 205–214 (EQEKEILHND), 215–222 (EREVLAVH), 223–230 (KKEILPPF), 231–238 (EKEKVLPL), 241–247 (HRVVPLP), 248–255 (QREIVPPF), 256–262 (QRETLLP), and 263–269 (EEILPVN). Residues 144 to 269 (KREMLPIYER…LLPEEILPVN (126 aa)) are 16 X approximate tandem repeats.

Belongs to the beta-casein family. Mammary gland specific. Secreted in milk.

The protein resides in the secreted. Its function is as follows. Important role in determination of the surface properties of the casein micelles. This is Beta-casein (CSN2) from Notamacropus eugenii (Tammar wallaby).